Consider the following 74-residue polypeptide: ATP synthase subunit 9, mitochondrial (74 aa).

2 consecutive transmembrane segments (helical) span residues 12 to 32 (LATIGLAGAGVGVGLVFAALI) and 50 to 70 (ILGFALTEAIGLFALMMAFLL).

This sequence belongs to the ATPase C chain family. In terms of assembly, F-type ATPases have 2 components, CF(1) - the catalytic core - and CF(0) - the membrane proton channel. CF(1) has five subunits: alpha(3), beta(3), gamma(1), delta(1), epsilon(1). CF(0) has three main subunits: a, b and c.

It is found in the mitochondrion membrane. Its function is as follows. Mitochondrial membrane ATP synthase (F(1)F(0) ATP synthase or Complex V) produces ATP from ADP in the presence of a proton gradient across the membrane which is generated by electron transport complexes of the respiratory chain. F-type ATPases consist of two structural domains, F(1) - containing the extramembraneous catalytic core and F(0) - containing the membrane proton channel, linked together by a central stalk and a peripheral stalk. During catalysis, ATP synthesis in the catalytic domain of F(1) is coupled via a rotary mechanism of the central stalk subunits to proton translocation. Part of the complex F(0) domain. A homomeric c-ring of probably 10 subunits is part of the complex rotary element. In Rhizopus oryzae (Mucormycosis agent), this protein is ATP synthase subunit 9, mitochondrial.